Here is a 311-residue protein sequence, read N- to C-terminus: Probable manganese-dependent inorganic pyrophosphatase (311 aa).

6 residues coordinate Mn(2+): His-9, Asp-13, Asp-15, Asp-75, His-97, and Asp-149.

Belongs to the PPase class C family. Requires Mn(2+) as cofactor.

The protein resides in the cytoplasm. The catalysed reaction is diphosphate + H2O = 2 phosphate + H(+). The sequence is that of Probable manganese-dependent inorganic pyrophosphatase from Lactobacillus acidophilus (strain ATCC 700396 / NCK56 / N2 / NCFM).